Consider the following 31-residue polypeptide: Histone H1.3 (31 aa).

It belongs to the histone H1/H5 family.

Its subcellular location is the nucleus. The protein localises to the chromosome. Histones H1 are necessary for the condensation of nucleosome chains into higher-order structures. This Triticum aestivum (Wheat) protein is Histone H1.3.